Consider the following 442-residue polypeptide: Tubby-related protein 3 (442 aa).

Residues 23 to 68 (MRQAKLDYQRLLLEKRQRKKRLEPFMVQPNPEARLRRAKPRASDEQ) are required for association with the IFT complex A (IFT-A). Positions 101–177 (PSVSSSVVEE…TSGSATAAQP (77 aa)) are disordered. Positions 145–162 (GISQSACLERPNSASSQN) are enriched in polar residues. Low complexity predominate over residues 163–175 (STDTGTSGSATAA).

The protein belongs to the TUB family. Associates with the IFT complex A (IFT-A). Interacts with SIRT1. Expressed at high levels in testis, ovaries, thyroid, and spinal cord.

The protein resides in the nucleus. Its subcellular location is the cell membrane. It localises to the cell projection. The protein localises to the cilium. It is found in the cytoplasm. The protein resides in the secreted. Its function is as follows. Negative regulator of the Shh signaling transduction pathway: recruited to primary cilia via association with the IFT complex A (IFT-A) and is required for recruitment of G protein-coupled receptor GPR161 to cilia, a promoter of PKA-dependent basal repression machinery in Shh signaling. Binds to phosphorylated inositide (phosphoinositide) lipids. Both IFT-A- and phosphoinositide-binding properties are required to regulate ciliary G protein-coupled receptor trafficking. During adipogenesis, regulates ciliary trafficking of FFAR4 in preadipocytes. This chain is Tubby-related protein 3, found in Homo sapiens (Human).